A 475-amino-acid polypeptide reads, in one-letter code: Sulfate adenylyltransferase subunit 1 (475 aa).

Residues 25-239 form the tr-type G domain; it reads KSLLRFLTCG…EVLETVEIQR (215 aa). The G1 stretch occupies residues 34 to 41; the sequence is GSVDDGKS. 34–41 provides a ligand contact to GTP; sequence GSVDDGKS. Positions 92–96 are G2; that stretch reads GITID. Positions 113–116 are G3; that stretch reads DTPG. GTP is bound by residues 113 to 117 and 168 to 171; these read DTPGH and NKMD. The interval 168–171 is G4; it reads NKMD. The interval 206-208 is G5; the sequence is SAL.

It belongs to the TRAFAC class translation factor GTPase superfamily. Classic translation factor GTPase family. CysN/NodQ subfamily. In terms of assembly, heterodimer composed of CysD, the smaller subunit, and CysN.

It catalyses the reaction sulfate + ATP + H(+) = adenosine 5'-phosphosulfate + diphosphate. It functions in the pathway sulfur metabolism; hydrogen sulfide biosynthesis; sulfite from sulfate: step 1/3. Functionally, with CysD forms the ATP sulfurylase (ATPS) that catalyzes the adenylation of sulfate producing adenosine 5'-phosphosulfate (APS) and diphosphate, the first enzymatic step in sulfur assimilation pathway. APS synthesis involves the formation of a high-energy phosphoric-sulfuric acid anhydride bond driven by GTP hydrolysis by CysN coupled to ATP hydrolysis by CysD. In Shigella sonnei (strain Ss046), this protein is Sulfate adenylyltransferase subunit 1.